Here is a 315-residue protein sequence, read N- to C-terminus: Mannose-6-phosphate isomerase ManA (315 aa).

The Zn(2+) site is built by His-97, Glu-115, and His-172. Arg-192 is an active-site residue.

It belongs to the mannose-6-phosphate isomerase type 1 family. Requires Zn(2+) as cofactor.

The enzyme catalyses D-mannose 6-phosphate = D-fructose 6-phosphate. This chain is Mannose-6-phosphate isomerase ManA (manA), found in Bacillus subtilis (strain 168).